A 1098-amino-acid polypeptide reads, in one-letter code: Unconventional myosin-If (1098 aa).

Positions Ser17–Glu690 constitute a Myosin motor domain. Residue Gly110–Thr117 participates in ATP binding. Positions Pro579 to Glu589 are actin-binding. An IQ domain is found at Phe693–Asn722. The region spanning Lys728–Asp917 is the TH1 domain. 2 disordered regions span residues Val913 to Asn1009 and Lys1021 to Pro1044. A compositionally biased stretch (basic residues) spans Lys924–Arg937. Ser1023 carries the phosphoserine modification. The region spanning Thr1041–Ile1098 is the SH3 domain.

This sequence belongs to the TRAFAC class myosin-kinesin ATPase superfamily. Myosin family.

Myosins are actin-based motor molecules with ATPase activity. Unconventional myosins serve in intracellular movements. Their highly divergent tails are presumed to bind to membranous compartments, which would be moved relative to actin filaments. The chain is Unconventional myosin-If (MYO1F) from Homo sapiens (Human).